Consider the following 1077-residue polypeptide: Response regulator SSK1 (1077 aa).

Residues 854–1000 (NVLIVEDNII…FLERKVMEWG (147 aa)) form the Response regulatory domain. D903 carries the post-translational modification 4-aspartylphosphate.

The protein belongs to the SSK1 family.

It is found in the cytoplasm. Two-domain response regulator protein in the two-component signal transduction system of the HOG1 pathway. Involved in multi-stress responses and is essential for conidiation, secondary metabolism, autophagy and endocyrosis. In addition, regulates mycelial growth, cell nucleus development, septum formation, and organelle development. Also regulates trap formation and thus plays a crucial role in pathogenicity. This is Response regulator SSK1 from Arthrobotrys oligospora (strain ATCC 24927 / CBS 115.81 / DSM 1491) (Nematode-trapping fungus).